Reading from the N-terminus, the 286-residue chain is uncharacterized protein (286 aa).

A disordered region spans residues 1-47 (MAIPFLHKGGSDDSTHHHTHDYDHHNHDHHGHDHHSHDSSSNSSSEA). The span at 9 to 26 (GGSDDSTHHHTHDYDHHN) shows a compositional bias: basic and acidic residues. 93–100 (GPVGSGKT) contributes to the GTP binding site.

It belongs to the SIMIBI class G3E GTPase family. UreG subfamily.

The protein resides in the cytoplasm. Its subcellular location is the nucleus. In terms of biological role, probably facilitates nickel incorporation. This is an uncharacterized protein from Schizosaccharomyces pombe (strain 972 / ATCC 24843) (Fission yeast).